The following is a 1442-amino-acid chain: DNA polymerase III PolC-type (1442 aa).

Residues 409-568 (YVIFDIETTG…YDAIVLADVF (160 aa)) enclose the Exonuclease domain.

Belongs to the DNA polymerase type-C family. PolC subfamily.

The protein localises to the cytoplasm. It carries out the reaction DNA(n) + a 2'-deoxyribonucleoside 5'-triphosphate = DNA(n+1) + diphosphate. Required for replicative DNA synthesis. This DNA polymerase also exhibits 3' to 5' exonuclease activity. The sequence is that of DNA polymerase III PolC-type from Ureaplasma parvum serovar 3 (strain ATCC 700970).